Here is a 316-residue protein sequence, read N- to C-terminus: GPI-specific phospholipase A2-like PGAP3 (316 aa).

The signal sequence occupies residues 1-18; it reads MAPFLVLFLAGVVAASRG. The Lumenal portion of the chain corresponds to 19 to 93; sequence DREPVYRDCV…QFHGKWPFSR (75 aa). The N-linked (GlcNAc...) asparagine glycan is linked to Asn35. The chain crosses the membrane as a helical span at residues 94-114; it reads FLFFQEPASALASFLNGVASL. Residues 115–132 are Cytoplasmic-facing; sequence LMLLRYRSSVPSSCQMYR. Residues 133–153 form a helical membrane-spanning segment; sequence TCLAFSMVSVNAWFWSTIFHT. Topologically, residues 154–163 are lumenal; it reads RDTALTEKMD. Residues 164–180 traverse the membrane as a helical segment; sequence YFCASSVILHSIYLCCM. Residues 181–182 lie on the Cytoplasmic side of the membrane; it reads RT. Residues 183 to 203 traverse the membrane as a helical segment; the sequence is FGLQYPSIANGFGAFLVLLFA. At 204–218 the chain is on the lumenal side; it reads CHVSYLTLGRFDYSY. The chain crosses the membrane as a helical span at residues 219–239; the sequence is NMAANTGFGVLNLMWWLAWCF. At 240 to 251 the chain is on the cytoplasmic side; sequence RRRFHQPYLWKC. Residues 252-272 form a helical membrane-spanning segment; it reads VLVVISLQSLALLELLDFPPV. Residue Met273 is a topological domain, lumenal. The helical transmembrane segment at 274–293 threads the bilayer; sequence WILDAHALWHFSTVPLHFLF. At 294 to 316 the chain is on the cytoplasmic side; that stretch reads YSFLKDDSLYLLKINHDDIPKLD.

This sequence belongs to the PGAP3 family.

Its subcellular location is the golgi apparatus membrane. Involved in the fatty acid remodeling steps of GPI-anchor maturation where the unsaturated acyl chain at sn-2 of inositol phosphate is replaced by a saturated stearoyl chain. May catalyze the first step of the fatty acid remodeling, by removing the unsaturated acyl chain at sn-2 of inositol phosphate, generating a lyso-GPI intermediate. The fatty acid remodeling steps is critical for the integration of GPI-APs into lipid rafts. In Xenopus tropicalis (Western clawed frog), this protein is GPI-specific phospholipase A2-like PGAP3.